The chain runs to 373 residues: tRNA-specific 2-thiouridylase MnmA (373 aa).

ATP contacts are provided by residues 12–19 and Met38; that span reads GMSGGVDS. The interaction with target base in tRNA stretch occupies residues 98–100; sequence NPD. Cys103 serves as the catalytic Nucleophile. Cysteines 103 and 200 form a disulfide. Gly127 lines the ATP pocket. Residues 150-152 form an interaction with tRNA region; that stretch reads KDQ. Cys200 functions as the Cysteine persulfide intermediate in the catalytic mechanism. The interval 312–313 is interaction with tRNA; it reads RY.

It belongs to the MnmA/TRMU family.

It localises to the cytoplasm. The enzyme catalyses S-sulfanyl-L-cysteinyl-[protein] + uridine(34) in tRNA + AH2 + ATP = 2-thiouridine(34) in tRNA + L-cysteinyl-[protein] + A + AMP + diphosphate + H(+). In terms of biological role, catalyzes the 2-thiolation of uridine at the wobble position (U34) of tRNA, leading to the formation of s(2)U34. The protein is tRNA-specific 2-thiouridylase MnmA of Streptococcus pyogenes serotype M2 (strain MGAS10270).